Here is a 361-residue protein sequence, read N- to C-terminus: S-adenosylmethionine decarboxylase proenzyme (361 aa).

Active-site residues include glutamate 11 and glutamate 14. Serine 71 acts as the Schiff-base intermediate with substrate; via pyruvic acid in catalysis. Serine 71 is subject to Pyruvic acid (Ser); by autocatalysis. Cysteine 85 serves as the catalytic Proton donor; for catalytic activity. Residues serine 234 and histidine 247 each act as proton acceptor; for processing activity in the active site.

The protein belongs to the eukaryotic AdoMetDC family. The cofactor is pyruvate. In terms of processing, is synthesized initially as an inactive proenzyme. Formation of the active enzyme involves a self-maturation process in which the active site pyruvoyl group is generated from an internal serine residue via an autocatalytic post-translational modification. Two non-identical subunits are generated from the proenzyme in this reaction, and the pyruvate is formed at the N-terminus of the alpha chain, which is derived from the carboxyl end of the proenzyme. The post-translation cleavage follows an unusual pathway, termed non-hydrolytic serinolysis, in which the side chain hydroxyl group of the serine supplies its oxygen atom to form the C-terminus of the beta chain, while the remainder of the serine residue undergoes an oxidative deamination to produce ammonia and the pyruvoyl group blocking the N-terminus of the alpha chain.

The catalysed reaction is S-adenosyl-L-methionine + H(+) = S-adenosyl 3-(methylsulfanyl)propylamine + CO2. Its pathway is amine and polyamine biosynthesis; S-adenosylmethioninamine biosynthesis; S-adenosylmethioninamine from S-adenosyl-L-methionine: step 1/1. The polypeptide is S-adenosylmethionine decarboxylase proenzyme (SAMDC) (Daucus carota (Wild carrot)).